We begin with the raw amino-acid sequence, 301 residues long: GTPase IMAP family member 3 (301 aa).

The Cytoplasmic portion of the chain corresponds to 1 to 279 (METLQNVVTG…GKKLEVLHSD (279 aa)). Residues 20 to 223 (SRPLRILLVG…HSNDLFLHAE (204 aa)) form the AIG1-type G domain. GTP-binding positions include 29-37 (GKSGCGKSA), S50, 147-149 (RKE), and N184. The tract at residues 263-301 (VLKVLPIGKKLEVLHSDFCWYLVLAILIFFVFFFLLFYV) is required for targeting to the endoplasmic reticulum. The chain crosses the membrane as a helical; Anchor for type IV membrane protein span at residues 280–300 (FCWYLVLAILIFFVFFFLLFY). V301 is a topological domain (lumenal).

This sequence belongs to the TRAFAC class TrmE-Era-EngA-EngB-Septin-like GTPase superfamily. AIG1/Toc34/Toc159-like paraseptin GTPase family. IAN subfamily. In terms of assembly, interacts with BAD, BAK1, BAX, BCL2, BCL2L1/Bcl-xL and BCL2L11/BimEL. The interaction with BAX is increased, when cells initiate apoptosis upon IL2 withdrawal. Expressed in thymus (in thymocytes), spleen (in splenocytes), lymph node and, at lower levels, in lung. Highly expressed in T lymphocytes.

The protein resides in the endoplasmic reticulum membrane. In terms of biological role, during thymocyte development, may support the positive selection of CD4 and CD8 T cells. May play a role in mitochondrial DNA segregation in hematopoietic tissues. Binds GTP. The polypeptide is GTPase IMAP family member 3 (Gimap3) (Mus musculus (Mouse)).